The following is a 236-amino-acid chain: Phosphoribosylaminoimidazole-succinocarboxamide synthase (236 aa).

The protein belongs to the SAICAR synthetase family.

The enzyme catalyses 5-amino-1-(5-phospho-D-ribosyl)imidazole-4-carboxylate + L-aspartate + ATP = (2S)-2-[5-amino-1-(5-phospho-beta-D-ribosyl)imidazole-4-carboxamido]succinate + ADP + phosphate + 2 H(+). The protein operates within purine metabolism; IMP biosynthesis via de novo pathway; 5-amino-1-(5-phospho-D-ribosyl)imidazole-4-carboxamide from 5-amino-1-(5-phospho-D-ribosyl)imidazole-4-carboxylate: step 1/2. The sequence is that of Phosphoribosylaminoimidazole-succinocarboxamide synthase from Pseudomonas paraeruginosa (strain DSM 24068 / PA7) (Pseudomonas aeruginosa (strain PA7)).